The sequence spans 153 residues: Protein eva-1 homolog A (153 aa).

A helical transmembrane segment spans residues Ala-37–Val-57. Residues Lys-66–Leu-97 form a disordered region.

It belongs to the EVA1 family.

It is found in the endoplasmic reticulum membrane. It localises to the lysosome membrane. In terms of biological role, acts as a regulator of programmed cell death, mediating both autophagy and apoptosis. The polypeptide is Protein eva-1 homolog A (Eva1a) (Danio rerio (Zebrafish)).